Consider the following 160-residue polypeptide: Cyclic pyranopterin monophosphate synthase (160 aa).

Substrate-binding positions include L75–H77 and M113–E114. Residue D128 is part of the active site.

Belongs to the MoaC family. Homohexamer; trimer of dimers.

The catalysed reaction is (8S)-3',8-cyclo-7,8-dihydroguanosine 5'-triphosphate = cyclic pyranopterin phosphate + diphosphate. The protein operates within cofactor biosynthesis; molybdopterin biosynthesis. Catalyzes the conversion of (8S)-3',8-cyclo-7,8-dihydroguanosine 5'-triphosphate to cyclic pyranopterin monophosphate (cPMP). The sequence is that of Cyclic pyranopterin monophosphate synthase from Beijerinckia indica subsp. indica (strain ATCC 9039 / DSM 1715 / NCIMB 8712).